We begin with the raw amino-acid sequence, 510 residues long: GMP synthase [glutamine-hydrolyzing] (510 aa).

Residues 5 to 195 form the Glutamine amidotransferase type-1 domain; the sequence is KILVLDFGGQ…LFKVCGVKGT (191 aa). Cysteine 82 (nucleophile) is an active-site residue. Residues histidine 169 and glutamate 171 contribute to the active site. The GMPS ATP-PPase domain maps to 196–385; sequence WNMADFINEE…LGLPDEIVWR (190 aa). 223-229 provides a ligand contact to ATP; sequence SGGVDSA.

In terms of assembly, homodimer.

It carries out the reaction XMP + L-glutamine + ATP + H2O = GMP + L-glutamate + AMP + diphosphate + 2 H(+). The protein operates within purine metabolism; GMP biosynthesis; GMP from XMP (L-Gln route): step 1/1. Its function is as follows. Catalyzes the synthesis of GMP from XMP. The chain is GMP synthase [glutamine-hydrolyzing] from Halothermothrix orenii (strain H 168 / OCM 544 / DSM 9562).